Reading from the N-terminus, the 156-residue chain is Arginine repressor (156 aa).

This sequence belongs to the ArgR family.

It is found in the cytoplasm. It participates in amino-acid biosynthesis; L-arginine biosynthesis [regulation]. Functionally, regulates arginine biosynthesis genes. The polypeptide is Arginine repressor (Shewanella frigidimarina (strain NCIMB 400)).